The following is a 239-amino-acid chain: Purine nucleoside phosphorylase DeoD-type 1 (239 aa).

Residue H5 coordinates a purine D-ribonucleoside. Phosphate is bound by residues G21, R25, R44, and 88–91; that span reads RVGS. A purine D-ribonucleoside-binding positions include 180 to 182 and 204 to 205; these read EME and SD. Residue D205 is the Proton donor of the active site.

The protein belongs to the PNP/UDP phosphorylase family. As to quaternary structure, homohexamer; trimer of homodimers.

It catalyses the reaction a purine D-ribonucleoside + phosphate = a purine nucleobase + alpha-D-ribose 1-phosphate. The catalysed reaction is a purine 2'-deoxy-D-ribonucleoside + phosphate = a purine nucleobase + 2-deoxy-alpha-D-ribose 1-phosphate. In terms of biological role, catalyzes the reversible phosphorolytic breakdown of the N-glycosidic bond in the beta-(deoxy)ribonucleoside molecules, with the formation of the corresponding free purine bases and pentose-1-phosphate. The polypeptide is Purine nucleoside phosphorylase DeoD-type 1 (Vibrio vulnificus (strain CMCP6)).